Here is a 95-residue protein sequence, read N- to C-terminus: Progonadoliberin-1 (95 aa).

The N-terminal stretch at 1-22 is a signal peptide; sequence MAPQTFALWLLLVGTLLGQGCC. Q23 is subject to Pyrrolidone carboxylic acid. G32 bears the Glycine amide mark.

Belongs to the GnRH family.

The protein resides in the secreted. In terms of biological role, stimulates the secretion of gonadotropins. In Morone saxatilis (Striped bass), this protein is Progonadoliberin-1 (gnrh1).